Consider the following 656-residue polypeptide: Fidgetin-like protein 1 (656 aa).

A compositionally biased stretch (polar residues) spans 293-302 (KYSNQPQRNP). A disordered region spans residues 293–354 (KYSNQPQRNP…QGNSEMNAPS (62 aa)). Over residues 331 to 340 (RQEDVQDSNR) the composition is skewed to basic and acidic residues. ATP-binding positions include Ala386 and 426 to 431 (GTGKTL).

This sequence belongs to the AAA ATPase family. In terms of assembly, hexamer. Requires Mg(2+) as cofactor.

The protein resides in the nucleus. The protein localises to the cytoplasm. It is found in the perinuclear region. The enzyme catalyses ATP + H2O = ADP + phosphate + H(+). In terms of biological role, may be involved in DNA double-strand break (DBS) repair via homologous recombination (HR). May regulate osteoblast proliferation and differentiation. This Xenopus tropicalis (Western clawed frog) protein is Fidgetin-like protein 1 (fignl1).